The primary structure comprises 303 residues: Glucosyl-3-phosphoglycerate synthase (303 aa).

UDP-alpha-D-glucose is bound by residues 35-39 (PALNE), Ser66, Lys99, and 119-120 (DS). Position 121 (Asp121) interacts with Mn(2+). 166–169 (GRVT) lines the (2R)-3-phosphoglycerate pocket. UDP-alpha-D-glucose is bound by residues 211 to 214 (YGVE) and 238 to 243 (RAHRNR). His240 is a Mn(2+) binding site. Asn242 contributes to the (2R)-3-phosphoglycerate binding site.

The protein belongs to the glycosyltransferase 2 family. In terms of assembly, homotrimer. Mg(2+) is required as a cofactor. The cofactor is Mn(2+).

The enzyme catalyses an NDP-alpha-D-glucose + (2R)-3-phosphoglycerate = (2R)-2-O-(alpha-D-glucopyranosyl)-3-phospho-glycerate + a ribonucleoside 5'-diphosphate + H(+). It catalyses the reaction (2R)-3-phosphoglycerate + UDP-alpha-D-glucose = (2R)-2-O-(alpha-D-glucopyranosyl)-3-phospho-glycerate + UDP + H(+). The catalysed reaction is ADP-alpha-D-glucose + (2R)-3-phosphoglycerate = (2R)-2-O-(alpha-D-glucopyranosyl)-3-phospho-glycerate + ADP + H(+). It carries out the reaction GDP-D-glucose + (2R)-3-phosphoglycerate = (2R)-2-O-(alpha-D-glucopyranosyl)-3-phospho-glycerate + GDP + H(+). In terms of biological role, involved in the biosynthesis of 6-O-methylglucose lipopolysaccarides (MGLPs). Catalyzes the transfer of the glucose moiety from a nuleotide sugar such as UDP-alpha-D-glucose to the position 2 of 3-phospho-D-glycerate (3-PGA) to form glucosyl-3-phosphoglycerate (GPG). It can use UDP-glucose, ADP-glucose and GDP-glucose as sugar donor substrates with decreasing affinity and with 3-PGA as an acceptor. D-glycerate can only be an acceptor with ADP-glucose and at a very low rate. The protein is Glucosyl-3-phosphoglycerate synthase (gpgS) of Mycolicibacterium smegmatis (strain ATCC 700084 / mc(2)155) (Mycobacterium smegmatis).